Here is a 61-residue protein sequence, read N- to C-terminus: Delta-actitoxin-Avd2c (61 aa).

The N-terminal stretch at 1-20 is a signal peptide; it reads MMNRLLVFLMLGAFMLVVSA. Residues 21–31 constitute a propeptide that is removed on maturation; sequence NDAYGGDESLG. 3 disulfide bridges follow: cysteine 36–cysteine 51, cysteine 37–cysteine 45, and cysteine 39–cysteine 56.

This sequence belongs to the sea anemone short toxin (type III) family.

The protein localises to the secreted. The protein resides in the nematocyst. Sodium channel inhibitor. 5 uM completely inhibits voltage-gated sodium channel (Nav) inactivation. This chain is Delta-actitoxin-Avd2c, found in Anemonia viridis (Snakelocks anemone).